We begin with the raw amino-acid sequence, 37 residues long: Brevinin-2DYe (37 aa).

An intrachain disulfide couples Cys-31 to Cys-37.

In terms of tissue distribution, expressed by the skin glands.

The protein resides in the secreted. Antimicrobial peptide. Active against the Gram-positive bacterium S.aureus (MIC=15 uM) and the Gram-negative bacterium E.coli (MIC=30 uM). The polypeptide is Brevinin-2DYe (Rana dybowskii (Dybovsky's frog)).